The sequence spans 190 residues: Threonylcarbamoyl-AMP synthase (190 aa).

The region spanning Ser-7–Gly-190 is the YrdC-like domain.

It belongs to the SUA5 family. TsaC subfamily.

It is found in the cytoplasm. The enzyme catalyses L-threonine + hydrogencarbonate + ATP = L-threonylcarbamoyladenylate + diphosphate + H2O. Required for the formation of a threonylcarbamoyl group on adenosine at position 37 (t(6)A37) in tRNAs that read codons beginning with adenine. Catalyzes the conversion of L-threonine, HCO(3)(-)/CO(2) and ATP to give threonylcarbamoyl-AMP (TC-AMP) as the acyladenylate intermediate, with the release of diphosphate. The polypeptide is Threonylcarbamoyl-AMP synthase (Sodalis glossinidius (strain morsitans)).